The primary structure comprises 59 residues: Small ribosomal subunit protein bS21 (59 aa).

The protein belongs to the bacterial ribosomal protein bS21 family.

In Acaryochloris marina (strain MBIC 11017), this protein is Small ribosomal subunit protein bS21.